Consider the following 456-residue polypeptide: tRNA modification GTPase MnmE (456 aa).

Positions 21, 85, and 124 each coordinate (6S)-5-formyl-5,6,7,8-tetrahydrofolate. The region spanning 220–379 (QFRIVLYGEP…LLDAIKERTG (160 aa)) is the TrmE-type G domain. Asn-230 is a binding site for K(+). GTP contacts are provided by residues 230-235 (NTGKSS), 249-255 (SEIPGTT), and 274-277 (DTAG). Ser-234 is a binding site for Mg(2+). Residues Ser-249, Ile-251, and Thr-254 each contribute to the K(+) site. A Mg(2+)-binding site is contributed by Thr-255. Residue Lys-456 participates in (6S)-5-formyl-5,6,7,8-tetrahydrofolate binding.

It belongs to the TRAFAC class TrmE-Era-EngA-EngB-Septin-like GTPase superfamily. TrmE GTPase family. As to quaternary structure, homodimer. Heterotetramer of two MnmE and two MnmG subunits. The cofactor is K(+).

It localises to the cytoplasm. Functionally, exhibits a very high intrinsic GTPase hydrolysis rate. Involved in the addition of a carboxymethylaminomethyl (cmnm) group at the wobble position (U34) of certain tRNAs, forming tRNA-cmnm(5)s(2)U34. The polypeptide is tRNA modification GTPase MnmE (Leptospira interrogans serogroup Icterohaemorrhagiae serovar copenhageni (strain Fiocruz L1-130)).